Here is a 443-residue protein sequence, read N- to C-terminus: Immediate-early protein ICP-46 homolog (443 aa).

Residues 82–110 (EFSEHEQEELKEKMAQLNHCLEDCELDYS) are a coiled coil.

Belongs to the IIV-6 393L family.

This is Immediate-early protein ICP-46 homolog from Aedes vexans (Inland floodwater mosquito).